Here is a 275-residue protein sequence, read N- to C-terminus: Tropinone reductase-like 2 (275 aa).

NAD(+) is bound at residue 17 to 41 (IITGGASGIGACTAELFHENGAKVV). Residue serine 150 coordinates substrate. Tyrosine 163 (proton acceptor) is an active-site residue.

Belongs to the short-chain dehydrogenases/reductases (SDR) family.

Functionally, has no tropinone reductase activity. This Erythroxylum coca (Coca plant) protein is Tropinone reductase-like 2.